Reading from the N-terminus, the 311-residue chain is GTP cyclohydrolase FolE2 (311 aa).

The protein belongs to the GTP cyclohydrolase IV family.

The enzyme catalyses GTP + H2O = 7,8-dihydroneopterin 3'-triphosphate + formate + H(+). It functions in the pathway cofactor biosynthesis; 7,8-dihydroneopterin triphosphate biosynthesis; 7,8-dihydroneopterin triphosphate from GTP: step 1/1. Converts GTP to 7,8-dihydroneopterin triphosphate. The protein is GTP cyclohydrolase FolE2 of Hydrogenovibrio crunogenus (strain DSM 25203 / XCL-2) (Thiomicrospira crunogena).